A 105-amino-acid polypeptide reads, in one-letter code: uncharacterized protein (105 aa).

A helical membrane pass occupies residues 41 to 62 (GIITKIAASPFVIVLYFNTAFF).

The protein localises to the membrane. This is an uncharacterized protein from Saccharomyces cerevisiae (strain ATCC 204508 / S288c) (Baker's yeast).